The following is a 128-amino-acid chain: Azurin (128 aa).

The Plastocyanin-like domain maps to alanine 1–lysine 128. The cysteines at positions 3 and 26 are disulfide-linked. 4 residues coordinate Cu cation: histidine 46, cysteine 112, histidine 117, and methionine 121.

It is found in the periplasm. Its function is as follows. Transfers electrons from cytochrome c551 to cytochrome oxidase. This chain is Azurin, found in Pseudomonas putida (Arthrobacter siderocapsulatus).